The primary structure comprises 869 residues: Structure-specific endonuclease subunit SLX4 (869 aa).

Over residues 40 to 59 (SPLSLPSPTSLLDFLSTSTS) the composition is skewed to low complexity. Disordered regions lie at residues 40–79 (SPLS…EVLD), 92–116 (NRVV…ESPG), 165–199 (KANQ…INDL), 293–323 (GLSD…NPPK), 351–388 (TLLS…KKNE), 418–437 (ANGH…HISN), and 630–774 (KTSN…ASET). Positions 63 to 79 (ARSDTDGDKTQGKEVLD) are enriched in basic and acidic residues. Polar residues-rich tracts occupy residues 165–174 (KANQTVSLQP) and 294–311 (LSDS…SATS). Positions 312 to 322 (KPRRVKAKNPP) are enriched in basic residues. Polar residues-rich tracts occupy residues 647–657 (VDESTQGQSLG) and 664–673 (SIPQTATTQV). Low complexity predominate over residues 688 to 700 (VPVPSRRSTSTSK). Polar residues predominate over residues 765–774 (IPSTGTASET).

This sequence belongs to the SLX4 family. Forms a heterodimer with SLX1. Phosphorylated in response to DNA damage.

The protein resides in the nucleus. Functionally, regulatory subunit of the SLX1-SLX4 structure-specific endonuclease that resolves DNA secondary structures generated during DNA repair and recombination. Has endonuclease activity towards branched DNA substrates, introducing single-strand cuts in duplex DNA close to junctions with ss-DNA. The chain is Structure-specific endonuclease subunit SLX4 from Paracoccidioides brasiliensis (strain Pb18).